A 403-amino-acid polypeptide reads, in one-letter code: Acetylornithine aminotransferase (403 aa).

Pyridoxal 5'-phosphate-binding positions include 101 to 102 and Phe-134; that span reads GA. Position 137 (Arg-137) interacts with N(2)-acetyl-L-ornithine. Residue 219–222 participates in pyridoxal 5'-phosphate binding; the sequence is DEVQ. Lys-248 carries the post-translational modification N6-(pyridoxal phosphate)lysine. Thr-276 provides a ligand contact to N(2)-acetyl-L-ornithine. Thr-277 is a pyridoxal 5'-phosphate binding site.

Belongs to the class-III pyridoxal-phosphate-dependent aminotransferase family. ArgD subfamily. Homodimer. Requires pyridoxal 5'-phosphate as cofactor.

The protein resides in the cytoplasm. The catalysed reaction is N(2)-acetyl-L-ornithine + 2-oxoglutarate = N-acetyl-L-glutamate 5-semialdehyde + L-glutamate. Its pathway is amino-acid biosynthesis; L-arginine biosynthesis; N(2)-acetyl-L-ornithine from L-glutamate: step 4/4. This chain is Acetylornithine aminotransferase, found in Brucella melitensis biotype 1 (strain ATCC 23456 / CCUG 17765 / NCTC 10094 / 16M).